A 384-amino-acid polypeptide reads, in one-letter code: Dual-specificity RNA methyltransferase RlmN (384 aa).

Glu-93 acts as the Proton acceptor in catalysis. A Radical SAM core domain is found at 99–339; it reads EETRGTLCVS…TTIRKTRGDD (241 aa). An intrachain disulfide couples Cys-106 to Cys-344. The [4Fe-4S] cluster site is built by Cys-113, Cys-117, and Cys-120. S-adenosyl-L-methionine contacts are provided by residues 170-171, Ser-202, 224-226, and Asn-301; these read GE and SLH. Residue Cys-344 is the S-methylcysteine intermediate of the active site.

It belongs to the radical SAM superfamily. RlmN family. Requires [4Fe-4S] cluster as cofactor.

Its subcellular location is the cytoplasm. It catalyses the reaction adenosine(2503) in 23S rRNA + 2 reduced [2Fe-2S]-[ferredoxin] + 2 S-adenosyl-L-methionine = 2-methyladenosine(2503) in 23S rRNA + 5'-deoxyadenosine + L-methionine + 2 oxidized [2Fe-2S]-[ferredoxin] + S-adenosyl-L-homocysteine. The catalysed reaction is adenosine(37) in tRNA + 2 reduced [2Fe-2S]-[ferredoxin] + 2 S-adenosyl-L-methionine = 2-methyladenosine(37) in tRNA + 5'-deoxyadenosine + L-methionine + 2 oxidized [2Fe-2S]-[ferredoxin] + S-adenosyl-L-homocysteine. In terms of biological role, specifically methylates position 2 of adenine 2503 in 23S rRNA and position 2 of adenine 37 in tRNAs. m2A2503 modification seems to play a crucial role in the proofreading step occurring at the peptidyl transferase center and thus would serve to optimize ribosomal fidelity. In Cupriavidus necator (strain ATCC 17699 / DSM 428 / KCTC 22496 / NCIMB 10442 / H16 / Stanier 337) (Ralstonia eutropha), this protein is Dual-specificity RNA methyltransferase RlmN.